The primary structure comprises 64 residues: Large ribosomal subunit protein bL35 (64 aa).

The protein belongs to the bacterial ribosomal protein bL35 family.

The protein is Large ribosomal subunit protein bL35 of Pseudomonas putida (strain W619).